An 87-amino-acid polypeptide reads, in one-letter code: Small ribosomal subunit protein uS12m (87 aa).

It belongs to the universal ribosomal protein uS12 family.

The protein localises to the mitochondrion matrix. It is found in the kinetoplast. Protein S12 is involved in the translation initiation step. The polypeptide is Small ribosomal subunit protein uS12m (RPS12) (Trypanoplasma borreli).